Consider the following 333-residue polypeptide: Arylacetonitrilase (333 aa).

A CN hydrolase domain is found at 9-284 (VRVAVTQAEP…EGIIYADLEM (276 aa)). Catalysis depends on E49, which acts as the Proton acceptor. K129 is a catalytic residue. Catalysis depends on C164, which acts as the Nucleophile.

This sequence belongs to the carbon-nitrogen hydrolase superfamily. Nitrilase family.

The catalysed reaction is a nitrile + 2 H2O = a carboxylate + NH4(+). The enzyme catalyses 4-chlorophenylacetonitrile + 2 H2O = 4-chlorophenylacetate + NH4(+). Its function is as follows. Nitrilase that hydrolyzes preferentially phenylacetonitrile, (R,S)-mandelonitrile, and 3-indolylacetonitrile. The sequence is that of Arylacetonitrilase from Aspergillus oryzae (strain ATCC 42149 / RIB 40) (Yellow koji mold).